The chain runs to 261 residues: DNA oxidative demethylase ALKBH2 (261 aa).

The segment at methionine 1–tryptophan 57 is disordered. The PCNA-binding motif lies at arginine 3 to lysine 7. Residues phenylalanine 102 to lysine 104 and tyrosine 122 to phenylalanine 124 each bind substrate. The Fe2OG dioxygenase domain maps to threonine 152 to leucine 257. Residues asparagine 159, tyrosine 161, and histidine 171 each coordinate 2-oxoglutarate. The Fe cation site is built by histidine 171 and aspartate 173. Aspartate 174 serves as a coordination point for substrate. Residues histidine 236, arginine 248, threonine 252, and arginine 254 each contribute to the 2-oxoglutarate site. Histidine 236 is a binding site for Fe cation.

Belongs to the alkB family. In terms of assembly, interacts with PCNA homotrimer; this interaction is enhanced during the S-phase of the cell cycle. Interacts with nucleolar proteins NCL, UBTF and NPM1. Interacts with XRCC5-XRCC6 heterodimer. Fe(2+) is required as a cofactor. Detected in colon, small intestine, ovary, testis, prostate, skeletal muscle, heart, liver and urinary bladder.

The protein localises to the nucleus. Its subcellular location is the nucleolus. It localises to the nucleoplasm. It carries out the reaction a methylated nucleobase within DNA + 2-oxoglutarate + O2 = a nucleobase within DNA + formaldehyde + succinate + CO2. The catalysed reaction is an N(1)-methyl-2'-deoxyadenosine in double-stranded DNA + 2-oxoglutarate + O2 = a 2'-deoxyadenosine in double-stranded DNA + formaldehyde + succinate + CO2 + H(+). The enzyme catalyses an N(1)-methyl-2'-deoxyadenosine in single-stranded DNA + 2-oxoglutarate + O2 = a 2'-deoxyadenosine in single-stranded DNA + formaldehyde + succinate + CO2 + H(+). It catalyses the reaction an N(3)-methyl-2'-deoxycytidine in double-stranded DNA + 2-oxoglutarate + O2 = a 2'-deoxycytidine in double-stranded DNA + formaldehyde + succinate + CO2 + H(+). It carries out the reaction an N(3)-methyl-2'-deoxycytidine in single-stranded DNA + 2-oxoglutarate + O2 = a 2'-deoxycytidine in single-stranded DNA + formaldehyde + succinate + CO2 + H(+). The catalysed reaction is a 1,N(6)-etheno-2'-deoxyadenosine in double-stranded DNA + 2-oxoglutarate + O2 + H2O = a 2'-deoxyadenosine in double-stranded DNA + glyoxal + succinate + CO2. The enzyme catalyses a 1,N(6)-etheno-2'-deoxyadenosine in single-stranded DNA + 2-oxoglutarate + O2 + H2O = a 2'-deoxyadenosine in single-stranded DNA + glyoxal + succinate + CO2. It catalyses the reaction a 3,N(4)-etheno-2'-deoxycytidine in double-stranded DNA + 2-oxoglutarate + O2 + H2O = a 2'-deoxycytidine in double-stranded DNA + glyoxal + succinate + CO2. It carries out the reaction a 3,N(4)-etheno-2'-deoxycytidine in single-stranded DNA + 2-oxoglutarate + O2 + H2O = a 2'-deoxycytidine in single-stranded DNA + glyoxal + succinate + CO2. The catalysed reaction is a 1,N(2)-etheno-2'-deoxyguanosine in double-stranded DNA + 2-oxoglutarate + O2 + H2O = a 2'-deoxyguanosine in double-stranded DNA + glyoxal + succinate + CO2. Its activity is regulated as follows. Activated by ascorbate and magnesium ions. Functionally, dioxygenase that repairs alkylated nucleic acid bases by direct reversal oxidative dealkylation. Can process both double-stranded (ds) and single-stranded (ss) DNA substrates, with a strong preference for dsDNA. Uses molecular oxygen, 2-oxoglutarate and iron as cofactors to oxidize the alkyl groups that are subsequently released as aldehydes, regenerating the undamaged bases. Probes the base pair stability, locates a weakened base pair and flips the damaged base to accommodate the lesion in its active site for efficient catalysis. Repairs monoalkylated bases, specifically N1-methyladenine and N3-methylcytosine, as well as higher order alkyl adducts such as bases modified with exocyclic bridged adducts known as etheno adducts including 1,N6-ethenoadenine, 3,N4-ethenocytosine and 1,N2-ethenoguanine. Acts as a gatekeeper of genomic integrity under alkylation stress. Efficiently repairs alkylated lesions in ribosomal DNA (rDNA). These lesions can cause ss- and dsDNA strand breaks that severely impair rDNA transcription. In a response mechanism to DNA damage, associates with PCNA at replication forks to repair alkylated adducts prior to replication. The polypeptide is DNA oxidative demethylase ALKBH2 (ALKBH2) (Homo sapiens (Human)).